The sequence spans 380 residues: Glucose-1-phosphate adenylyltransferase (380 aa).

Residues Gly-164, 179 to 180, and Ser-190 contribute to the alpha-D-glucose 1-phosphate site; that span reads EK.

This sequence belongs to the bacterial/plant glucose-1-phosphate adenylyltransferase family. As to quaternary structure, homotetramer.

It carries out the reaction alpha-D-glucose 1-phosphate + ATP + H(+) = ADP-alpha-D-glucose + diphosphate. It functions in the pathway glycan biosynthesis; glycogen biosynthesis. Involved in the biosynthesis of ADP-glucose, a building block required for the elongation reactions to produce glycogen. Catalyzes the reaction between ATP and alpha-D-glucose 1-phosphate (G1P) to produce pyrophosphate and ADP-Glc. The polypeptide is Glucose-1-phosphate adenylyltransferase (Streptococcus pneumoniae serotype 2 (strain D39 / NCTC 7466)).